A 533-amino-acid polypeptide reads, in one-letter code: Probable protein kinase UbiB (533 aa).

A helical membrane pass occupies residues 24–44 (LILELPMLPWWLRLLGATLPW). A Protein kinase domain is found at 126-494 (RFEREPLASA…WKGSRHDWLG (369 aa)). ATP is bound by residues 132 to 140 (LASASVAQV) and Lys154. Catalysis depends on Asp289, which acts as the Proton acceptor. Residues 510-530 (LGQQLEAWPAWVMLAGGVFLI) traverse the membrane as a helical segment.

This sequence belongs to the ABC1 family. UbiB subfamily.

It is found in the cell inner membrane. The protein operates within cofactor biosynthesis; ubiquinone biosynthesis [regulation]. Is probably a protein kinase regulator of UbiI activity which is involved in aerobic coenzyme Q (ubiquinone) biosynthesis. The sequence is that of Probable protein kinase UbiB from Pseudomonas aeruginosa (strain UCBPP-PA14).